A 420-amino-acid polypeptide reads, in one-letter code: Senescence-associated protein SPA15, chloroplastic (420 aa).

A chloroplast-targeting transit peptide spans 1–68; that stretch reads MAKPNGIIYS…YIATRGSSLR (68 aa). The disordered stretch occupies residues 85–111; sequence EYRDSSDTSSMQGKDKDPASLGKSGTP.

This sequence belongs to the ATA15/OSA15 family. As to expression, expressed in leaves.

Its subcellular location is the plastid. It localises to the chloroplast. In terms of biological role, may be involved in the regulation of leaf senescence. This is Senescence-associated protein SPA15, chloroplastic from Ipomoea batatas (Sweet potato).